Reading from the N-terminus, the 376-residue chain is UDP-N-acetylenolpyruvoylglucosamine reductase (376 aa).

Residues 48-219 (VGGPARHLVI…LDVTMQFNLG (172 aa)) form the FAD-binding PCMH-type domain. Residue Arg196 is part of the active site. Residue Ser274 is the Proton donor of the active site. Glu368 is a catalytic residue.

Belongs to the MurB family. It depends on FAD as a cofactor.

It localises to the cytoplasm. The enzyme catalyses UDP-N-acetyl-alpha-D-muramate + NADP(+) = UDP-N-acetyl-3-O-(1-carboxyvinyl)-alpha-D-glucosamine + NADPH + H(+). It participates in cell wall biogenesis; peptidoglycan biosynthesis. Functionally, cell wall formation. This is UDP-N-acetylenolpyruvoylglucosamine reductase from Cutibacterium acnes (strain DSM 16379 / KPA171202) (Propionibacterium acnes).